Reading from the N-terminus, the 132-residue chain is Small ribosomal subunit protein uS8 (132 aa).

Belongs to the universal ribosomal protein uS8 family. In terms of assembly, part of the 30S ribosomal subunit. Contacts proteins S5 and S12.

One of the primary rRNA binding proteins, it binds directly to 16S rRNA central domain where it helps coordinate assembly of the platform of the 30S subunit. This Lacticaseibacillus casei (strain BL23) (Lactobacillus casei) protein is Small ribosomal subunit protein uS8.